Here is a 538-residue protein sequence, read N- to C-terminus: Prickle planar cell polarity protein 3-A (538 aa).

The PET domain occupies 66 to 175 (SGSQRDSLCE…CVRPVSGTMS (110 aa)). 3 LIM zinc-binding domains span residues 177-241 (TVCQ…ELKR), 242-302 (PRCL…LYAQ), and 305-366 (DSCG…NATP). Polar residues predominate over residues 369-378 (SFSPSQTDLS). Disordered stretches follow at residues 369–398 (SFSP…DGDS), 433–463 (RGAP…TRVT), and 475–538 (SVSL…CLLS). Residues 435–449 (APKEFSRECPNRRSL) are compositionally biased toward basic and acidic residues. A compositionally biased stretch (polar residues) spans 451–463 (DLNSHTRTPTRVT). Composition is skewed to low complexity over residues 475–488 (SVSL…SSSS) and 514–523 (APPTHAPTST).

Belongs to the prickle / espinas / testin family. As to quaternary structure, interacts with vangl2 via its C-terminus. The vangl2-dependent membrane recruitment of prickle3 is a prerequisite for its polarization. Interacts with wtip. Wtip is involved in the recruitment of prickle3 to the basal body. As to expression, predominantly expressed in the epidermal ectoderm.

Its subcellular location is the cytoplasm. The protein localises to the cell membrane. The protein resides in the mitochondrion. Functionally, involved in the planar cell polarity (PCP) pathway that is essential for the polarization of epithelial cells during morphogenetic processes, including gastrulation and neurulation. PCP is maintained by two molecular modules, the global and the core modules. Proteins of the core module include the proteins Frizzled (Fz), Disheveled (Dsh), Van Gogh (Vang), Prickle (Pk), Flamingo (Fmi, Celsr) and Diego (Dgo). The core module proteins develop subcellular asymmetry, accumulating in two groups on opposite sides of epithelial cells. Distinct proximal (Vang, Pk and Fmi) and distal (Fz, Dsh, Dgo and Fmi) complexes segregate to opposite sides of the cell, where they interact with the opposite complex in the neighboring cell at or near the adherents junctions. Directional information to orient polarization with respect to the tissue axes is provided by the global module which involves Wnt proteins. Involved in the organization of the basal body. Involved in cilia growth and positioning. Required for proper assembly, stability, and function of mitochondrial membrane ATP synthase (mitochondrial complex V). The protein is Prickle planar cell polarity protein 3-A (prickle3-a) of Xenopus laevis (African clawed frog).